The chain runs to 89 residues: Small ribosomal subunit protein uS15 (89 aa).

It belongs to the universal ribosomal protein uS15 family. In terms of assembly, part of the 30S ribosomal subunit. Forms a bridge to the 50S subunit in the 70S ribosome, contacting the 23S rRNA.

Its function is as follows. One of the primary rRNA binding proteins, it binds directly to 16S rRNA where it helps nucleate assembly of the platform of the 30S subunit by binding and bridging several RNA helices of the 16S rRNA. Functionally, forms an intersubunit bridge (bridge B4) with the 23S rRNA of the 50S subunit in the ribosome. The protein is Small ribosomal subunit protein uS15 of Cupriavidus necator (strain ATCC 17699 / DSM 428 / KCTC 22496 / NCIMB 10442 / H16 / Stanier 337) (Ralstonia eutropha).